The sequence spans 108 residues: Thiosulfate sulfurtransferase GlpE (108 aa).

The region spanning 17–105 (QEKEAVLVDI…WQRQFPAEVA (89 aa)) is the Rhodanese domain. The Cysteine persulfide intermediate role is filled by cysteine 65.

The protein belongs to the GlpE family.

Its subcellular location is the cytoplasm. The catalysed reaction is thiosulfate + hydrogen cyanide = thiocyanate + sulfite + 2 H(+). The enzyme catalyses thiosulfate + [thioredoxin]-dithiol = [thioredoxin]-disulfide + hydrogen sulfide + sulfite + 2 H(+). In terms of biological role, transferase that catalyzes the transfer of sulfur from thiosulfate to thiophilic acceptors such as cyanide or dithiols. May function in a CysM-independent thiosulfate assimilation pathway by catalyzing the conversion of thiosulfate to sulfite, which can then be used for L-cysteine biosynthesis. This Escherichia coli O157:H7 protein is Thiosulfate sulfurtransferase GlpE.